A 697-amino-acid polypeptide reads, in one-letter code: Trishanku (697 aa).

Residues 1–94 (MEIEPVVRIS…NNNSNSNGTD (94 aa)) form a disordered region. A compositionally biased stretch (low complexity) spans 12–47 (NGNNNQNNNNNNNNNTNNNSNNNNNNNNSSNINSTN). A compositionally biased stretch (polar residues) spans 58-72 (KMISNINNQKSPNPL). The span at 73-91 (NSSVDDNNNTNNNNNSNSN) shows a compositional bias: low complexity. The BTB domain occupies 122 to 189 (SDVIFKVGDR…ICIGILDLDY (68 aa)). The segment at 311–455 (IQQQQQQQQQ…DSANDDYEYS (145 aa)) is disordered. A compositionally biased stretch (low complexity) spans 312-331 (QQQQQQQQQQLQSANGASGK). Over residues 332–344 (SHGKRSSSSHLKK) the composition is skewed to basic residues. The segment covering 353 to 363 (GSCSSRCSSRR) has biased composition (low complexity). A compositionally biased stretch (acidic residues) spans 416–453 (DDFENDSEDGDDDDEDDDEDDDFTDDDDKDDSANDDYE).

As to expression, expressed strongly in presumptive spore (prespore or psp) cells during the late G2 phase of cell cycle. Present at a low level in vegetative cells.

Functionally, required for normal morphogenesis and cell-type stability. This is Trishanku (triA) from Dictyostelium discoideum (Social amoeba).